We begin with the raw amino-acid sequence, 141 residues long: Large ribosomal subunit protein uL16 (141 aa).

Residues 1 to 21 (MLMPKRVKYRKQQRGHNRGMA) are disordered.

Belongs to the universal ribosomal protein uL16 family. In terms of assembly, part of the 50S ribosomal subunit.

Its function is as follows. Binds 23S rRNA and is also seen to make contacts with the A and possibly P site tRNAs. In Roseiflexus castenholzii (strain DSM 13941 / HLO8), this protein is Large ribosomal subunit protein uL16.